Consider the following 314-residue polypeptide: NF-kappa-B inhibitor alpha (314 aa).

The segment at 1-40 is disordered; sequence MFQPAGHGQDWAMEGPRDGLKKERLVDDRHDSGLDSMKDE. The segment covering 15–40 has biased composition (basic and acidic residues); sequence GPRDGLKKERLVDDRHDSGLDSMKDE. Residue K21 forms a Glycyl lysine isopeptide (Lys-Gly) (interchain with G-Cter in SUMO); alternate linkage. A Glycyl lysine isopeptide (Lys-Gly) (interchain with G-Cter in ubiquitin); alternate cross-link involves residue K21. Residue K22 forms a Glycyl lysine isopeptide (Lys-Gly) (interchain with G-Cter in ubiquitin) linkage. A Destruction motif motif is present at residues 30–36; it reads HDSGLDS. Phosphoserine; by IKKB is present on S32. A Phosphoserine; by IKKA, IKKB, IKKE and TBK1 modification is found at S36. Phosphotyrosine is present on Y42. A Nuclear export signal motif is present at residues 45–54; the sequence is MVKELREIRL. 5 ANK repeats span residues 73 to 103, 110 to 139, 143 to 172, 182 to 211, and 216 to 245; these read DGDS…DLAF, LQQT…DPEL, RGNT…PQHL, NGHT…DVNA, and NGRT…DVNR. The Nuclear import signal signature appears at 110-120; it reads LQQTPLHLAVI. 2 positions are modified to (3S)-3-hydroxyasparagine; by HIF1AN: N210 and N244. 2 positions are modified to phosphoserine; by CK2: S283 and S288. Position 291 is a phosphothreonine; by CK2 (T291). Position 293 is a phosphoserine; by CK2 (S293). T296 carries the phosphothreonine modification.

It belongs to the NF-kappa-B inhibitor family. As to quaternary structure, interacts with RELA; the interaction requires the nuclear import signal. Part of a 70-90 kDa complex at least consisting of CHUK, IKBKB, NFKBIA, RELA, ELP1 and MAP3K14. Interacts with NKIRAS1 and NKIRAS2. Interacts with RWDD3; the interaction enhances sumoylation. Interacts with PRMT2. Interacts with PRKACA in platelets; this interaction is disrupted by thrombin and collagen. Interacts with MEFV. Interacts with DDRGK1; positively regulates NFKBIA phosphorylation and degradation. Interacts with HNRNPA2B1; the interaction may be mediated by the RRM2 domain of HNRNPA2B1, and HNRNPA2B1 may interact simultaneously with FAM76B and either NFKBIA or NFKBIE to form a complex. Phosphorylated at Ser-32 and Ser-36 by IKKA/CHUK and IKKB/IKBKB; disables inhibition of NF-kappa-B DNA-binding activity. Phosphorylation at positions 32 and 36 is prerequisite to recognition by the SCF(FBXW11) and SCF(BTRC) complexes, leading to polyubiquitination and subsequent degradation. In terms of processing, polyubiquitinated at Lys-21 and/or Lys-22 following phosphorylation at Ser-32 and Ser-36. Monoubiquitinated at Lys-21 and/or Lys-22 by UBE2D3. Ubiquitin chain elongation is then performed by CDC34 in cooperation with the SCF(FBXW11) E3 ligase complex, building ubiquitin chains from the UBE2D3-primed NFKBIA-linked ubiquitin. The resulting polyubiquitination leads to protein degradation. Also ubiquitinated by the SCF(BTRC) complex following stimulus-dependent phosphorylation at Ser-32 and Ser-36. Deubiquitinated by USP38, leading to NF-kappa-B inhibition. Post-translationally, sumoylated; sumoylation requires the presence of the nuclear import signal. Sumoylation blocks ubiquitination and proteasome-mediated degradation of the protein thereby increasing the protein stability. Hydroxylated by HIF1AN. Highly expressed in lymph node, thymus followed by liver, brain, muscle, kidney, gastrointestinal and reproductive tract.

The protein localises to the cytoplasm. The protein resides in the nucleus. Its function is as follows. Inhibits the activity of dimeric NF-kappa-B/REL complexes by trapping REL (RELA/p65 and NFKB1/p50) dimers in the cytoplasm by masking their nuclear localization signals. On cellular stimulation by immune and pro-inflammatory responses, becomes phosphorylated promoting ubiquitination and degradation, enabling the dimeric RELA to translocate to the nucleus and activate transcription. The polypeptide is NF-kappa-B inhibitor alpha (Nfkbia) (Mus musculus (Mouse)).